We begin with the raw amino-acid sequence, 430 residues long: 3-deoxy-D-manno-octulosonic acid transferase (430 aa).

A helical; Signal-anchor membrane pass occupies residues 12-32; the sequence is AFLVAAFLAAAPRIFYKVVFH. The active-site Proton acceptor is the Glu-66. Residues 274 to 275, 314 to 316, and 341 to 344 each bind CMP; these read PR, MGI, and NLLE.

The protein belongs to the glycosyltransferase group 1 family. Glycosyltransferase 30 subfamily.

The protein resides in the cell inner membrane. The enzyme catalyses lipid IVA (E. coli) + CMP-3-deoxy-beta-D-manno-octulosonate = alpha-Kdo-(2-&gt;6)-lipid IVA (E. coli) + CMP + H(+). It carries out the reaction alpha-Kdo-(2-&gt;6)-lipid IVA (E. coli) + CMP-3-deoxy-beta-D-manno-octulosonate = alpha-Kdo-(2-&gt;4)-alpha-Kdo-(2-&gt;6)-lipid IVA (E. coli) + CMP + H(+). The catalysed reaction is alpha-Kdo-(2-&gt;4)-alpha-Kdo-(2-&gt;6)-lipid IVA (E. coli) + CMP-3-deoxy-beta-D-manno-octulosonate = alpha-Kdo-(2-&gt;8)-alpha-Kdo-(2-&gt;4)-alpha-Kdo-(2-&gt;6)-lipid IVA (E. coli) + CMP + H(+). Its pathway is bacterial outer membrane biogenesis; LPS core biosynthesis. Its function is as follows. Involved in lipopolysaccharide (LPS) biosynthesis. Catalyzes the transfer of three 3-deoxy-D-manno-octulosonate (Kdo) residues from CMP-Kdo to lipid IV(A), the tetraacyldisaccharide-1,4'-bisphosphate precursor of lipid A. Thus generates the genus-specific LPS epitope of Chlamydia, composed of the trisaccharide alpha-Kdo-(2-&gt;8)-alpha-Kdo-(2-&gt;4)-alpha-Kdo. The sequence is that of 3-deoxy-D-manno-octulosonic acid transferase (waaA) from Chlamydia muridarum (strain MoPn / Nigg).